A 617-amino-acid polypeptide reads, in one-letter code: Electron transfer flavoprotein-ubiquinone oxidoreductase, mitochondrial (617 aa).

A mitochondrion-targeting transit peptide spans 1–33 (MLVPLAKLSCLAYQCFHALKIKKNYLPLCATRW). 71 to 85 (VVIVGAGPAGLSAAV) is an FAD binding site. Lysine 96 is subject to N6-acetyllysine. An intramembrane segment occupies 109-130 (IGAHTLSGACLDPGAFKELFPD). N6-acetyllysine is present on residues lysine 132 and lysine 223. 2 residues coordinate a ubiquinone: glycine 305 and glycine 306. An N6-acetyllysine modification is found at lysine 357. An intramembrane segment occupies 428-447 (IGLHVTEYEDNLKNSWVWKE). Serine 551 carries the phosphoserine modification. 4 residues coordinate [4Fe-4S] cluster: cysteine 561, cysteine 586, cysteine 589, and cysteine 592. One can recognise a 4Fe-4S ferredoxin-type domain in the interval 577-606 (FRLQINAQNCVHCKTCDIKDPSQNINWVVP).

The protein belongs to the ETF-QO/FixC family. As to quaternary structure, monomer. Requires [4Fe-4S] cluster as cofactor. The cofactor is FAD.

Its subcellular location is the mitochondrion inner membrane. It catalyses the reaction a ubiquinone + reduced [electron-transfer flavoprotein] = a ubiquinol + oxidized [electron-transfer flavoprotein] + H(+). In terms of biological role, accepts electrons from ETF and reduces ubiquinone. The sequence is that of Electron transfer flavoprotein-ubiquinone oxidoreductase, mitochondrial from Homo sapiens (Human).